Consider the following 227-residue polypeptide: Cytochrome c oxidase subunit 2 (227 aa).

Over 1–26 the chain is Mitochondrial intermembrane; that stretch reads MATWSNLSIQDGASPLMEQLSFFHDD. A helical transmembrane segment spans residues 27–48; that stretch reads HTMVVLLITVIVGYALSYMLFN. Residues 49–62 lie on the Mitochondrial matrix side of the membrane; sequence AYTNRNMLHGHLIE. The helical transmembrane segment at 63-82 threads the bilayer; the sequence is TIWTALPAITLIFIALPSLR. The Mitochondrial intermembrane portion of the chain corresponds to 83-227; sequence LLYLLDDSVD…LFIKWLSKMI (145 aa). 6 residues coordinate Cu cation: H161, C196, E198, C200, H204, and M207. A Mg(2+)-binding site is contributed by E198.

The protein belongs to the cytochrome c oxidase subunit 2 family. In terms of assembly, component of the cytochrome c oxidase (complex IV, CIV), a multisubunit enzyme composed of a catalytic core of 3 subunits and several supernumerary subunits. The complex exists as a monomer or a dimer and forms supercomplexes (SCs) in the inner mitochondrial membrane with ubiquinol-cytochrome c oxidoreductase (cytochrome b-c1 complex, complex III, CIII). It depends on Cu cation as a cofactor.

It localises to the mitochondrion inner membrane. It carries out the reaction 4 Fe(II)-[cytochrome c] + O2 + 8 H(+)(in) = 4 Fe(III)-[cytochrome c] + 2 H2O + 4 H(+)(out). Its function is as follows. Component of the cytochrome c oxidase, the last enzyme in the mitochondrial electron transport chain which drives oxidative phosphorylation. The respiratory chain contains 3 multisubunit complexes succinate dehydrogenase (complex II, CII), ubiquinol-cytochrome c oxidoreductase (cytochrome b-c1 complex, complex III, CIII) and cytochrome c oxidase (complex IV, CIV), that cooperate to transfer electrons derived from NADH and succinate to molecular oxygen, creating an electrochemical gradient over the inner membrane that drives transmembrane transport and the ATP synthase. Cytochrome c oxidase is the component of the respiratory chain that catalyzes the reduction of oxygen to water. Electrons originating from reduced cytochrome c in the intermembrane space (IMS) are transferred via the dinuclear copper A center (CU(A)) of subunit 2 and heme A of subunit 1 to the active site in subunit 1, a binuclear center (BNC) formed by heme A3 and copper B (CU(B)). The BNC reduces molecular oxygen to 2 water molecules using 4 electrons from cytochrome c in the IMS and 4 protons from the mitochondrial matrix. The chain is Cytochrome c oxidase subunit 2 (COII) from Schistocerca gregaria (Desert locust).